The following is a 341-amino-acid chain: L-threonine 3-dehydrogenase (341 aa).

C38 serves as a coordination point for Zn(2+). Catalysis depends on charge relay system residues T40 and H43. Positions 63, 64, 93, 96, 99, and 107 each coordinate Zn(2+). Residues I175, D195, R200, 262–264 (LGI), and 286–287 (IY) contribute to the NAD(+) site.

The protein belongs to the zinc-containing alcohol dehydrogenase family. As to quaternary structure, homotetramer. The cofactor is Zn(2+).

The protein resides in the cytoplasm. The catalysed reaction is L-threonine + NAD(+) = (2S)-2-amino-3-oxobutanoate + NADH + H(+). It participates in amino-acid degradation; L-threonine degradation via oxydo-reductase pathway; glycine from L-threonine: step 1/2. In terms of biological role, catalyzes the NAD(+)-dependent oxidation of L-threonine to 2-amino-3-ketobutyrate. This is L-threonine 3-dehydrogenase from Salmonella typhi.